The following is a 544-amino-acid chain: Histone-arginine methyltransferase CARMER (544 aa).

The region spanning 150 to 459 (ASQYFQFYGY…QSYDVTIDLH (310 aa)) is the SAM-dependent MTase PRMT-type domain. S-adenosyl-L-methionine contacts are provided by Gln-163, Arg-172, Gly-196, Glu-218, Glu-247, and Thr-275. Residues 505–520 (DTQQQQQGSRNSNSML) are compositionally biased toward polar residues. The segment at 505-527 (DTQQQQQGSRNSNSMLNGGLSVN) is disordered. Residue Arg-514 is modified to Asymmetric dimethylarginine; by autocatalysis.

This sequence belongs to the class I-like SAM-binding methyltransferase superfamily. Protein arginine N-methyltransferase family. In terms of assembly, homodimer. In terms of processing, the dimethylated protein is the major form.

The protein resides in the cytoplasm. The protein localises to the nucleus. The catalysed reaction is L-arginyl-[protein] + 2 S-adenosyl-L-methionine = N(omega),N(omega)-dimethyl-L-arginyl-[protein] + 2 S-adenosyl-L-homocysteine + 2 H(+). Its function is as follows. Methylates (mono- and asymmetric dimethylation) the guanidino nitrogens of arginyl residues in proteins. May methylate histone H3 at 'Arg-17' and activate transcription via chromatin remodeling. In Drosophila grimshawi (Hawaiian fruit fly), this protein is Histone-arginine methyltransferase CARMER (Art4).